Reading from the N-terminus, the 225-residue chain is Small ribosomal subunit protein eS1 (225 aa).

This sequence belongs to the eukaryotic ribosomal protein eS1 family.

The sequence is that of Small ribosomal subunit protein eS1 from Methanococcus maripaludis (strain C6 / ATCC BAA-1332).